A 119-amino-acid polypeptide reads, in one-letter code: Protein TusC (119 aa).

This sequence belongs to the DsrF/TusC family. Heterohexamer, formed by a dimer of trimers. The hexameric TusBCD complex contains 2 copies each of TusB, TusC and TusD. The TusBCD complex interacts with TusE.

Its subcellular location is the cytoplasm. Functionally, part of a sulfur-relay system required for 2-thiolation of 5-methylaminomethyl-2-thiouridine (mnm(5)s(2)U) at tRNA wobble positions. The protein is Protein TusC of Shigella flexneri serotype 5b (strain 8401).